Reading from the N-terminus, the 115-residue chain is Large ribosomal subunit protein bL19 (115 aa).

This sequence belongs to the bacterial ribosomal protein bL19 family.

This protein is located at the 30S-50S ribosomal subunit interface and may play a role in the structure and function of the aminoacyl-tRNA binding site. The protein is Large ribosomal subunit protein bL19 of Clostridium tetani (strain Massachusetts / E88).